The following is a 431-amino-acid chain: MLEKVRFDLPQDEIPTEWYNILPDLPEPLPEPQDPTGKSFEILKQVLPSKVLELEFSKERYIKIPEEVLQRYLQVGRPTPIIRARKLEEYLGGYIKIYMKMESHTYTGSHKINSALAHVYFAKLDNAKFVSTETGAGQWGSAVALASALFNIQAHIFMVRTSYYAKPYRRYLMQMYNAQVHPSPSEFTRYGREVLAKDPNTPGSLGIAISEAVYYALENGGKYVVGSVVNSDILFKTIAGMEAKKQMEMIGEDPDYIIGVVGGGSNYAALAYPFLGEELRKGKVRRKYIASGAIEVPKMTKGVYKYDYPDTAKILPMLKMYTIGSDFIPAPVYAGGLRYHAVAPTLSLLMYKGIVQARDYSQEEAFSWAKLFSQIEGWVPAPETSHALPILKEIVEEAKKSGEKKTVLISFSGHGLLDLANYADVLGFNKE.

Lys-111 is modified (N6-(pyridoxal phosphate)lysine).

It belongs to the TrpB family. As to quaternary structure, tetramer of two alpha and two beta chains. Requires pyridoxal 5'-phosphate as cofactor.

The catalysed reaction is (1S,2R)-1-C-(indol-3-yl)glycerol 3-phosphate + L-serine = D-glyceraldehyde 3-phosphate + L-tryptophan + H2O. The protein operates within amino-acid biosynthesis; L-tryptophan biosynthesis; L-tryptophan from chorismate: step 5/5. Functionally, the beta subunit is responsible for the synthesis of L-tryptophan from indole and L-serine. This chain is Tryptophan synthase beta chain 2 (trpB2), found in Sulfurisphaera tokodaii (strain DSM 16993 / JCM 10545 / NBRC 100140 / 7) (Sulfolobus tokodaii).